A 693-amino-acid chain; its full sequence is Auxin response factor 10 (693 aa).

Residues 115 to 217 (FAKTLTQSDA…DLCVGIRRAK (103 aa)) constitute a DNA-binding region (TF-B3). A PB1 domain is found at 580–668 (TGHCKVFMES…DIGGDNVRKT (89 aa)).

The protein belongs to the ARF family. In terms of assembly, homodimers and heterodimers. In terms of tissue distribution, expressed in the whole plant.

The protein localises to the nucleus. Its function is as follows. Auxin response factors (ARFs) are transcriptional factors that bind specifically to the DNA sequence 5'-TGTCTC-3' found in the auxin-responsive promoter elements (AuxREs). Could act as transcriptional activator or repressor. Formation of heterodimers with Aux/IAA proteins may alter their ability to modulate early auxin response genes expression. This is Auxin response factor 10 (ARF10) from Arabidopsis thaliana (Mouse-ear cress).